A 159-amino-acid chain; its full sequence is Dihydrofolate reductase (159 aa).

The DHFR domain occupies 1–158 (MISLIAALAV…HSYCFEILER (158 aa)). Residue isoleucine 5 coordinates substrate. NADP(+)-binding positions include alanine 7 and 13 to 19 (VIGMENA). A substrate-binding site is contributed by aspartate 27. Residue 45-46 (LT) coordinates NADP(+). Substrate is bound by residues arginine 52 and arginine 57. Residues 63-64 (SS), lysine 76, and 95-102 (GGGRVYEQ) contribute to the NADP(+) site. Substrate is bound at residue threonine 113.

Belongs to the dihydrofolate reductase family.

It carries out the reaction (6S)-5,6,7,8-tetrahydrofolate + NADP(+) = 7,8-dihydrofolate + NADPH + H(+). The protein operates within cofactor biosynthesis; tetrahydrofolate biosynthesis; 5,6,7,8-tetrahydrofolate from 7,8-dihydrofolate: step 1/1. In terms of biological role, key enzyme in folate metabolism. Catalyzes an essential reaction for de novo glycine and purine synthesis, and for DNA precursor synthesis. This is Dihydrofolate reductase (folA) from Klebsiella aerogenes (Enterobacter aerogenes).